A 1260-amino-acid chain; its full sequence is Agglutinin-like protein 1 (1260 aa).

The N-terminal stretch at 1–17 (MLQQFTLLFLYLSIASA) is a signal peptide. 4 cysteine pairs are disulfide-bonded: cysteine 73-cysteine 150, cysteine 96-cysteine 112, cysteine 205-cysteine 298, and cysteine 227-cysteine 256. ALS repeat units lie at residues 365-396 (TTIT…VDVP), 401-432 (TTVT…VQVP), and 438-469 (VSTT…IREP). Asparagine 471 carries an N-linked (GlcNAc...) asparagine glycan. One copy of the ALS 4 repeat lies at 474 to 505 (VTTTEYWSQSFATTTTVTAPPGETDTVIIREP). Residue asparagine 507 is glycosylated (N-linked (GlcNAc...) asparagine). One copy of the ALS 5 repeat lies at 510 to 541 (VTTTEYWSQSYATTTTVTAPPGGTDTVLIREP). Asparagine 543 carries an N-linked (GlcNAc...) asparagine glycan. An ALS 6 repeat occupies 546 to 577 (VTTTEYWSQSYATTTTVTAPPGGTDTVIIREP). Asparagine 579 is a glycosylation site (N-linked (GlcNAc...) asparagine). One copy of the ALS 7 repeat lies at 582-613 (VTTTEYWSQSYATTTTITAPPGETDTVIIREP). A glycan (N-linked (GlcNAc...) asparagine) is linked at asparagine 615. An ALS 8 repeat occupies 618 to 649 (VTTTEYWSQSYATTTTVTAPPGGTDTVLIREP). Asparagine 651 carries N-linked (GlcNAc...) asparagine glycosylation. One copy of the ALS 9 repeat lies at 654–685 (VTTTEYWSQSYATTTTVTAPPGGTDTVLIREP). N-linked (GlcNAc...) asparagine glycosylation occurs at asparagine 687. The ALS 10 repeat unit spans residues 690–721 (VTTTEYWSQSYATTTTVTAPPGGTDTVIIREP). The N-linked (GlcNAc...) asparagine glycan is linked to asparagine 723. Residues 726–757 (VTTTEYWSQSYATTTTVTAPPGGTDTVIIREP) form an ALS 11 repeat. Asparagine 759 carries an N-linked (GlcNAc...) asparagine glycan. Residues 762–791 (VTTTEYWSQSFATTTTVTAPPGGTDTVIIY) form an ALS 12 repeat. Residues asparagine 820, asparagine 886, asparagine 918, and asparagine 973 are each glycosylated (N-linked (GlcNAc...) asparagine). 2 stretches are compositionally biased toward polar residues: residues 896 to 918 (PTAS…SSDN) and 964 to 979 (KVTF…GTHD). Disordered stretches follow at residues 896–924 (PTAS…KSGV) and 954–1226 (SIPS…SSSP). The segment covering 980-995 (SQSTSTEIEIVTTSST) has biased composition (low complexity). Residues 1002–1062 (VSSNTDLTSE…PTVATSTLAS (61 aa)) are compositionally biased toward polar residues. N-linked (GlcNAc...) asparagine glycosylation is found at asparagine 1045 and asparagine 1068. Polar residues predominate over residues 1073 to 1090 (HESASTSLKPSMGENSGL). The segment covering 1091-1110 (TTSTEIEATTTSPTEAPSPA) has biased composition (low complexity). Residues 1111–1154 (VSSGTDVTTEPTDTREQPTTLSTTSKTNSESVATTQATNENGGK) are compositionally biased toward polar residues. 2 stretches are compositionally biased toward low complexity: residues 1155–1176 (SPST…SANS) and 1197–1226 (SHST…SSSP). Glycine 1238 is lipidated: GPI-anchor amidated glycine. Residues 1239-1260 (SGSIIQHSTWLYGLITLLSLFI) constitute a propeptide, removed in mature form.

It belongs to the ALS family. The GPI-anchor is attached to the protein in the endoplasmic reticulum and serves to target the protein to the cell surface. There, the glucosamine-inositol phospholipid moiety is cleaved off and the GPI-modified mannoprotein is covalently attached via its lipidless GPI glycan remnant to the 1,6-beta-glucan of the outer cell wall layer.

The protein localises to the cell membrane. It is found in the secreted. Its subcellular location is the cell wall. Its function is as follows. Major cell surface adhesion protein which mediates both yeast-to-host tissue adherence and yeast aggregation. Acts as a downstream effector of the EFG1 regulatory pathway. Required for rapamycin-induced aggregation of C.albicans. Binds glycans and mediates adherence to endothelial and epithelial cells, thereby playing an important role in the pathogenesis of C.albicans infections. The sequence is that of Agglutinin-like protein 1 (ALS1) from Candida albicans (strain SC5314 / ATCC MYA-2876) (Yeast).